Consider the following 80-residue polypeptide: Cytochrome c oxidase subunit 7A1, mitochondrial (80 aa).

Residues 1–21 constitute a mitochondrion transit peptide; sequence MRALRVSQALVRSFSSTARNR. Topologically, residues 22-46 are mitochondrial matrix; the sequence is FENRVAEKQKLFQEDNGLPVHLKGG. Residues 47 to 75 form a helical membrane-spanning segment; that stretch reads ATDNILYRVTMTLCLGGTLYSLYCLGWAS. Residues 76 to 80 are Mitochondrial intermembrane-facing; sequence FPHKK.

It belongs to the cytochrome c oxidase VIIa family. Component of the complex IV (CIV, cytochrome c oxidase), a multisubunit enzyme composed of 14 subunits. The complex is composed of a catalytic core of 3 subunits MT-CO1, MT-CO2 and MT-CO3, encoded in the mitochondrial DNA, and 11 supernumerary subunits COX4I1 (or COX4I2), COX5A, COX5B, COX6A2 (or COX6A1), COX6B1 (or COX6B2), COX6C, COX7A1 (or COX7A2), COX7B, COX7C, COX8B and NDUFA4, which are encoded in the nuclear genome. The complex exists as a monomer or a dimer and forms supercomplexes (SCs) in the inner mitochondrial membrane with NADH-ubiquinone oxidoreductase (complex I, CI) and ubiquinol-cytochrome c oxidoreductase (cytochrome b-c1 complex, complex III, CIII), resulting in different assemblies (supercomplex SCI(1)III(2)IV(1) and megacomplex MCI(2)III(2)IV(2)).

The protein localises to the mitochondrion inner membrane. The protein operates within energy metabolism; oxidative phosphorylation. In terms of biological role, component of the mitochondrial respiratory complex IV (CIV, also named cytochrome c oxidase complex), the last enzyme in the mitochondrial electron transport chain which drives oxidative phosphorylation. The CIV complex is the component of the respiratory chain that catalyzes the reduction of oxygen to water. Acts as an assembly factor that specifically drives the homodimerization of CIV complexes, mediating the formation of mitochondrial respiratory supercomplexes (respirasomes) containing two CIV: supercomplxes with two molecules of CIV show improved activity. Despite being highly expressed in brown adipose tissue, not required for thermogenesis. The protein is Cytochrome c oxidase subunit 7A1, mitochondrial (COX7A1) of Bos taurus (Bovine).